The primary structure comprises 464 residues: Cysteine--tRNA ligase (464 aa).

Cys-28 contributes to the Zn(2+) binding site. The 'HIGH' region motif lies at 30-40 (VTVYDFCHIGH). Zn(2+) contacts are provided by Cys-209, His-234, and Glu-238. The short motif at 266-270 (KMSKS) is the 'KMSKS' region element. Residue Lys-269 coordinates ATP.

It belongs to the class-I aminoacyl-tRNA synthetase family. Monomer. Requires Zn(2+) as cofactor.

Its subcellular location is the cytoplasm. The catalysed reaction is tRNA(Cys) + L-cysteine + ATP = L-cysteinyl-tRNA(Cys) + AMP + diphosphate. This chain is Cysteine--tRNA ligase (cysS), found in Buchnera aphidicola subsp. Acyrthosiphon pisum (strain APS) (Acyrthosiphon pisum symbiotic bacterium).